Consider the following 1428-residue polypeptide: uncharacterized protein (1428 aa).

Disordered regions lie at residues 1 to 53, 249 to 274, and 377 to 413; these read MAKK…AFKV, DIKH…KDSK, and KNGI…ETRA. Polar residues predominate over residues 16-33; the sequence is ATTSIPSRSASSPANKNQ. Positions 34 to 51 are enriched in basic and acidic residues; the sequence is VKGEKNNKTQKVEPKNAF. Positions 256 to 265 are enriched in polar residues; sequence KETQPSNQVD. The 171-residue stretch at 641 to 811 folds into the Helicase ATP-binding domain; it reads IDAVNNSQLL…FEGSNLITIP (171 aa). ATP is bound at residue 654–661; that stretch reads GDTGCGKS. Residues 758–761 carry the DEAH box motif; it reads DEVH. One can recognise a Helicase C-terminal domain in the interval 886–1064; it reads LIVYLLKYIF…EVVLRVKMCQ (179 aa).

The protein belongs to the helicase family. SKI2 subfamily.

It is found in the cytoplasm. This is an uncharacterized protein from Schizosaccharomyces pombe (strain 972 / ATCC 24843) (Fission yeast).